We begin with the raw amino-acid sequence, 142 residues long: ATP synthase epsilon chain (142 aa).

The protein belongs to the ATPase epsilon chain family. As to quaternary structure, F-type ATPases have 2 components, CF(1) - the catalytic core - and CF(0) - the membrane proton channel. CF(1) has five subunits: alpha(3), beta(3), gamma(1), delta(1), epsilon(1). CF(0) has three main subunits: a, b and c.

Its subcellular location is the cell inner membrane. Its function is as follows. Produces ATP from ADP in the presence of a proton gradient across the membrane. This Haemophilus influenzae (strain 86-028NP) protein is ATP synthase epsilon chain.